Here is a 142-residue protein sequence, read N- to C-terminus: Large-conductance mechanosensitive channel (142 aa).

2 consecutive transmembrane segments (helical) span residues 14 to 34 (VVDLAVAVIIGAAFGKIVSSL) and 86 to 106 (FGQFITVAVNFLLIAFVVFLV).

This sequence belongs to the MscL family. As to quaternary structure, homopentamer.

Its subcellular location is the cell inner membrane. Its function is as follows. Channel that opens in response to stretch forces in the membrane lipid bilayer. May participate in the regulation of osmotic pressure changes within the cell. The protein is Large-conductance mechanosensitive channel of Rhizorhabdus wittichii (strain DSM 6014 / CCUG 31198 / JCM 15750 / NBRC 105917 / EY 4224 / RW1) (Sphingomonas wittichii).